We begin with the raw amino-acid sequence, 1014 residues long: Calcium-transporting ATPase 2, plasma membrane-type (1014 aa).

M1 carries the N-acetylmethionine modification. Residues M1 to G160 lie on the Cytoplasmic side of the membrane. Positions V20–V31 are interaction with calmodulin. Phosphoserine; by CPK1 is present on S45. A helical transmembrane segment spans residues F161–A181. The Lumenal segment spans residues F182–H199. The helical transmembrane segment at D200 to Y220 threads the bilayer. Topologically, residues R221–L348 are cytoplasmic. A helical transmembrane segment spans residues N349–A368. Over V369–Y398 the chain is Lumenal. A helical transmembrane segment spans residues F399–L416. Topologically, residues A417 to I810 are cytoplasmic. Residue D454 is the 4-aspartylphosphate intermediate of the active site. Mg(2+) contacts are provided by D755 and D759. Residues Q811–F829 form a helical membrane-spanning segment. Topologically, residues S830–L840 are lumenal. Residues T841 to A861 form a helical membrane-spanning segment. At T862–F881 the chain is on the cytoplasmic side. A helical transmembrane segment spans residues I882 to L904. Residues Q905–G916 are Lumenal-facing. Residues P917 to N938 traverse the membrane as a helical segment. The Cytoplasmic portion of the chain corresponds to E939–D956. A helical transmembrane segment spans residues N957–L978. Residues G979–T988 are Lumenal-facing. A helical transmembrane segment spans residues I989–K1010. Residues T1011–V1014 lie on the Cytoplasmic side of the membrane.

This sequence belongs to the cation transport ATPase (P-type) (TC 3.A.3) family. Type IIB subfamily.

It is found in the endoplasmic reticulum membrane. The catalysed reaction is Ca(2+)(in) + ATP + H2O = Ca(2+)(out) + ADP + phosphate + H(+). Activated by calmodulin. Its function is as follows. This magnesium-dependent enzyme catalyzes the hydrolysis of ATP coupled with the translocation of calcium from the cytosol into the endoplasmic reticulum. The chain is Calcium-transporting ATPase 2, plasma membrane-type (ACA2) from Arabidopsis thaliana (Mouse-ear cress).